A 733-amino-acid polypeptide reads, in one-letter code: E3 ubiquitin-protein ligase COP1 (733 aa).

The tract at residues 1–43 (MSGSRQAGSGSAGTSPGSSAASSVTSASSSLSSSPSPPSVAAS) is disordered. Residues 111-115 (SSRKR) carry the Nuclear localization signal 1 motif. The segment at 138–176 (CPICFDMIEEAYMTKCGHSFCYKCIHQSLEDNNRCPKCN) adopts an RING-type zinc-finger fold. Residues 197-208 (KQKQRFEEKRFK) carry the Nuclear localization signal 2 motif. The stretch at 231–306 (DQDNLDLANV…RVEEMSGLYS (76 aa)) forms a coiled coil. Positions 237–247 (LANVNLMLELL) match the Nuclear export signal motif. The segment at 307–327 (PVSEDSTVPQFEAPSPSHSSI) is disordered. 7 WD repeats span residues 421–460 (NGSS…QDAV), 470–510 (TCNS…RSKV), 513–553 (EHEK…SVAS), 555–595 (EAKA…QPIM), 599–637 (GHRK…CLRS), 640–679 (GHIN…TLLT), and 695–731 (EDDT…KVLE). The interaction with TRIB1 stretch occupies residues 645-647 (KNF).

Belongs to the COP1 family. As to quaternary structure, homodimer. Homodimerization is mediated by the coiled coil domain. Component of the DCX DET1-COP1 ubiquitin ligase complex at least composed of RBX1, DET1, DDB1, CUL4A and COP1. Isoform 2 does not interact with CUL4A but still binds to RBX1, suggesting that the interaction may be mediated by another cullin protein. Isoform 1 and isoform 2 interact with CUL5 but not with CUL1, CUL2 not CUL3. Interacts with bZIP transcription factors JUN, JUNB and JUND but not with FOS, ATF2 nor XBP1. Interacts with p53 (TP53). Interacts with COPS6; this interaction stabilizes RFWD2 through reducing its auto-ubiquitination and decelerating its turnover rate. Interacts with SFN; this interaction leads to SFN degradation. Interacts with p53/TP53 and MTA1. Interacts with TRIB1 (via C-terminus) and TRIB2.

The protein localises to the nucleus speckle. The protein resides in the cytoplasm. The enzyme catalyses S-ubiquitinyl-[E2 ubiquitin-conjugating enzyme]-L-cysteine + [acceptor protein]-L-lysine = [E2 ubiquitin-conjugating enzyme]-L-cysteine + N(6)-ubiquitinyl-[acceptor protein]-L-lysine.. It participates in protein modification; protein ubiquitination. Its activity is regulated as follows. TRIB1 competes with substrates for RFWD2 binding. Its function is as follows. E3 ubiquitin-protein ligase that mediates ubiquitination and subsequent proteasomal degradation of target proteins. E3 ubiquitin ligases accept ubiquitin from an E2 ubiquitin-conjugating enzyme in the form of a thioester and then directly transfers the ubiquitin to targeted substrates. Involved in JUN ubiquitination and degradation. Directly involved in p53 (TP53) ubiquitination and degradation, thereby abolishing p53-dependent transcription and apoptosis. Ubiquitinates p53 independently of MDM2 or RCHY1. Probably mediates E3 ubiquitin ligase activity by functioning as the essential RING domain subunit of larger E3 complexes. In contrast, it does not constitute the catalytic RING subunit in the DCX DET1-COP1 complex that negatively regulates JUN, the ubiquitin ligase activity being mediated by RBX1. Involved in 14-3-3 protein sigma/SFN ubiquitination and proteasomal degradation, leading to AKT activation and promotion of cell survival. Ubiquitinates MTA1 leading to its proteasomal degradation. Upon binding to TRIB1, ubiquitinates CEBPA, which lacks a canonical COP1-binding motif. In Mus musculus (Mouse), this protein is E3 ubiquitin-protein ligase COP1.